Consider the following 98-residue polypeptide: UPF0213 protein BPUM_0019 (98 aa).

A GIY-YIG domain is found at 4–79; it reads HNHYFYVLKC…KTWTRKKKDL (76 aa).

Belongs to the UPF0213 family.

The protein is UPF0213 protein BPUM_0019 of Bacillus pumilus (strain SAFR-032).